The primary structure comprises 494 residues: Leucine-rich repeat extensin-like protein 4 (494 aa).

Positions 1–25 are cleaved as a signal peptide; sequence MKNNTTQSLLLLLLFFFFFFEISHS. Asn60, Asn94, and Asn106 each carry an N-linked (GlcNAc...) asparagine glycan. LRR repeat units follow at residues 121–145, 146–168, 169–193, 194–217, 219–240, 242–263, 264–287, 289–311, and 312–335; these read IRTV…LGLL, TDLA…KFKQ, LKLL…VLHL, PSLK…LFSK, LDAI…FGDS, VSVI…LVEM, KNLN…IGRL, NVTV…VGGM, and VEVE…ICQL. Asn289 is a glycosylation site (N-linked (GlcNAc...) asparagine). An N-linked (GlcNAc...) asparagine glycan is attached at Asn340. Residues 404-494 form a contains the Ser-Pro(4) repeats region; sequence SPPIVALPPP…YASPPPPPFY (91 aa). A compositionally biased stretch (pro residues) spans 422-479; that stretch reads PPVYSPPPSPPVFSPPPSPPVYSPPPPPSIHYSSPPPPPVHHSSPPPPSPEFEGPLPP. A disordered region spans residues 422-482; that stretch reads PPVYSPPPSP…FEGPLPPVIG (61 aa).

In terms of processing, hydroxylated on proline residues in the S-P-P-P-P repeat. Post-translationally, O-glycosylated on hydroxyprolines. As to expression, expressed in roots, stems, leaves and flowers, mostly in vascular tissues.

It localises to the secreted. The protein localises to the cell wall. In terms of biological role, modulates cell morphogenesis by regulating cell wall formation and assembly, and/or growth polarization. The sequence is that of Leucine-rich repeat extensin-like protein 4 (LRX4) from Arabidopsis thaliana (Mouse-ear cress).